The sequence spans 346 residues: Upstream stimulatory factor 2 (346 aa).

2 disordered regions span residues 1–44 (MDML…PGAE) and 215–244 (APRTHPYSPKIDGTRTPRDERRRAQHNEVE). A compositionally biased stretch (low complexity) spans 11 to 20 (AASATAAAAA). The segment covering 226–244 (DGTRTPRDERRRAQHNEVE) has biased composition (basic and acidic residues). The 56-residue stretch at 235–290 (RRRAQHNEVERRRRDKINNWIVQLSKIIPDCNADNSKTGASKGGILSKACDYIREL) folds into the bHLH domain. Residues 307–328 (LQMDNELLRQQIEELKNENALL) are leucine-zipper.

As to quaternary structure, interacts with MAF. Efficient DNA binding requires dimerization with another bHLH protein. Binds DNA as a homodimer or a heterodimer (USF1/USF2). In vivo, the USF1/USF2A heterodimer represents over 66% of the usf binding activity whereas the USF1 and USF2A homodimers represent less than 10%. The USF1/USF2B heterodimer accounted for almost 15% in some cell. As to expression, ubiquitous.

The protein resides in the nucleus. Transcription factor that binds to a symmetrical DNA sequence (E-boxes) (5'-CACGTG-3') that is found in a variety of viral and cellular promoters. This chain is Upstream stimulatory factor 2 (USF2), found in Homo sapiens (Human).